A 241-amino-acid polypeptide reads, in one-letter code: MLPGCCKNGIVISKIPVMQAGLKEVMRTHFPEYEIISSASAEDLTLLQLRRSGLVIADLAGESEDPRSVCEHYYSLISQYREIHWVFMVSRSWYSQAVELLMCPTATLLSDVEPIENLVKTVRSGNTHAERISAMLTSPAMTETHDFSYRSVILTLSERKVLRLLGKGWGINQIASLLKKSNKTISAQKNSAMRRLAIHSNAEMYAWINSAQGARELNLPSVYGDAAEWNTAELRREMSHS.

Positions 147–212 (FSYRSVILTL…EMYAWINSAQ (66 aa)) constitute an HTH luxR-type domain.

This is an uncharacterized protein from Escherichia coli O157:H7.